The sequence spans 344 residues: Ferrochelatase (344 aa).

Fe cation is bound by residues His196 and Glu277.

Belongs to the ferrochelatase family.

It is found in the cytoplasm. The catalysed reaction is heme b + 2 H(+) = protoporphyrin IX + Fe(2+). It participates in porphyrin-containing compound metabolism; protoheme biosynthesis; protoheme from protoporphyrin-IX: step 1/1. In terms of biological role, catalyzes the ferrous insertion into protoporphyrin IX. The polypeptide is Ferrochelatase (Synechococcus sp. (strain JA-2-3B'a(2-13)) (Cyanobacteria bacterium Yellowstone B-Prime)).